Reading from the N-terminus, the 24-residue chain is Humanin-like 11 (24 aa).

Belongs to the humanin family.

It localises to the secreted. Its subcellular location is the cytoplasm. Plays a role as a neuroprotective and antiapoptotic factor. The chain is Humanin-like 11 from Homo sapiens (Human).